Reading from the N-terminus, the 576-residue chain is Nuclear receptor subfamily 1 group D member 2 (576 aa).

The segment at 1-60 is required for phosphorylation by CSNK1E and cytoplasmic localization; the sequence is MELNAGGVIAYISSSSSASSPASCHSEGSENSFQSSSSSVPSSPNSSNCDANGNPKNADI. Positions 1 to 99 are modulating; sequence MELNAGGVIA…HSGMTKFSGM (99 aa). Positions 13 to 47 are enriched in low complexity; that stretch reads SSSSSASSPASCHSEGSENSFQSSSSSVPSSPNSS. A disordered region spans residues 13 to 90; the sequence is SSSSSASSPA…TSAPGMTKSH (78 aa). Ser-46 is subject to Phosphoserine; by GSK3-beta. The segment at residues 100-176 is a DNA-binding region (nuclear receptor); that stretch reads VLLCKVCGDV…VGMSRDAVRF (77 aa). NR C4-type zinc fingers lie at residues 103-123 and 140-164; these read CKVC…CEGC and CLKN…FKKC. An N6-acetyllysine; by KAT5 mark is found at Lys-162 and Lys-163. Disordered stretches follow at residues 215 to 246 and 263 to 282; these read QHDQ…SDFA and LYNQ…QRGE. Composition is skewed to basic and acidic residues over residues 227–237 and 263–272; these read LRPKSQLEQEN and LYNQEHRENS. 2 cysteine pairs are disulfide-bonded: Cys-334-Cys-340 and Cys-371-Cys-381. An NR LBD domain is found at 366-576; that stretch reads RNSYLCNTGG…EELLAFKVHP (211 aa). Heme contacts are provided by Cys-381 and His-565. The interaction with ZNHIT1 stretch occupies residues 394 to 576; that stretch reads SGHEIWEEFS…EELLAFKVHP (183 aa).

The protein belongs to the nuclear hormone receptor family. NR1 subfamily. Binds DNA as a monomer or a homodimer. Interacts with NCOA5 coactivator, leading to a strong increase of transcription of target genes. Interacts (via N-terminus) with KAT5. Interacts (via C-terminus) with HDAC1. Interacts with ZNHIT1. Interacts with SIAH2. Deacetylated by HDAC1. Acetylation and deacetylation regulate its transcriptional regulatory activity. In terms of processing, under more reducing intracellular redox conditions, Cys-381 is in its heme-bound state, which is optimal for recruitment of the NCOR1/HDAC3 corepressor complex and repression of target genes. When subjected to oxidative stress conditions, Cys-381 undergoes oxidation to form a disulfide bridge with Cys-371, also triggering a ligand switch that results in release of bound heme and derepression of target genes. Post-translationally, ubiquitinated by SIAH2; leading to its proteasomal degradation. Phosphorylated by CSNK1E; phosphorylation enhances its cytoplasmic localization. As to expression, ubiquitous. Expressed abundantly in skeletal muscle and brown adipose tissue. Expressed during skeletal muscle myogenesis.

The protein resides in the nucleus. Its subcellular location is the cytoplasm. Its activity is regulated as follows. The heme-bound form can bind gaseous signaling molecules such as CO and nitric oxide (NO) and NO can reverse its transcriptional repressor activity. Its function is as follows. Transcriptional repressor which coordinates circadian rhythm and metabolic pathways in a heme-dependent manner. Integral component of the complex transcription machinery that governs circadian rhythmicity and forms a critical negative limb of the circadian clock by directly repressing the expression of core clock components BMAL1 and CLOCK. Also regulates genes involved in metabolic functions, including lipid metabolism and the inflammatory response. Acts as a receptor for heme which stimulates its interaction with the NCOR1/HDAC3 corepressor complex, enhancing transcriptional repression. Recognizes two classes of DNA response elements within the promoter of its target genes and can bind to DNA as either monomers or homodimers, depending on the nature of the response element. Binds as a monomer to a response element composed of the consensus half-site motif 5'-[A/G]GGTCA-3' preceded by an A/T-rich 5' sequence (RevRE), or as a homodimer to a direct repeat of the core motif spaced by two nuclegotides (RevDR-2). Acts as a potent competitive repressor of ROR alpha (RORA) function and also negatively regulates the expression of NR1D1. Regulates lipid and energy homeostasis in the skeletal muscle via repression of genes involved in lipid metabolism and myogenesis including: CD36, FABP3, FABP4, UCP3, SCD1 and MSTN. Regulates hepatic lipid metabolism via the repression of APOC3. Represses gene expression at a distance in macrophages by inhibiting the transcription of enhancer-derived RNAs (eRNAs). In addition to its activity as a repressor, can also act as a transcriptional activator. Acts as a transcriptional activator of the sterol regulatory element-binding protein 1 (SREBF1) and the inflammatory mediator interleukin-6 (IL6) in the skeletal muscle. Plays a role in the regulation of circadian sleep/wake cycle; essential for maintaining wakefulness during the dark phase or active period. Key regulator of skeletal muscle mitochondrial function; negatively regulates the skeletal muscle expression of core clock genes and genes involved in mitochondrial biogenesis, fatty acid beta-oxidation and lipid metabolism. May play a role in the circadian control of neutrophilic inflammation in the lung. In Mus musculus (Mouse), this protein is Nuclear receptor subfamily 1 group D member 2.